The following is a 300-amino-acid chain: Ferredoxin/F(420)H(2)-dependent CoB-CoM heterodisulfide reductase subunit B (300 aa).

Belongs to the HdrB family. In terms of assembly, the ferredoxin/F(420)H(2)-dependent CoB-CoM heterodisulfide reductase is composed of three subunits; HdrA2, HdrB2 and HdrC2. [4Fe-4S] cluster is required as a cofactor.

Its subcellular location is the cytoplasm. It catalyses the reaction coenzyme B + coenzyme M + 2 oxidized [2Fe-2S]-[ferredoxin] = coenzyme M-coenzyme B heterodisulfide + 2 reduced [2Fe-2S]-[ferredoxin] + 2 H(+). It carries out the reaction coenzyme B + 2 oxidized coenzyme F420-(gamma-L-Glu)(n) + coenzyme M + 2 reduced [2Fe-2S]-[ferredoxin] + 4 H(+) = coenzyme M-coenzyme B heterodisulfide + 2 reduced coenzyme F420-(gamma-L-Glu)(n) + 2 oxidized [2Fe-2S]-[ferredoxin]. It participates in cofactor metabolism; coenzyme M-coenzyme B heterodisulfide reduction; coenzyme B and coenzyme M from coenzyme M-coenzyme B heterodisulfide: step 1/1. Part of a complex that catalyzes the reversible reduction of CoM-S-S-CoB to the thiol-coenzymes H-S-CoM (coenzyme M) and H-S-CoB (coenzyme B). Catalyzes the transfer of electrons from ferredoxin to CoM-S-S-CoB during methanogenesis from acetate. Electrons transfer from ferredoxin to CoM-S-S-CoB via HdrA2, HdrC2 and HdrB2. In addition, the complex can use electron bifurcation to direct electron pairs from reduced coenzyme F420 towards the reduction of both ferredoxin and CoB-CoM heterodisulfide. This activity may take place during Fe(III)-dependent anaerobic methane oxidation. The polypeptide is Ferredoxin/F(420)H(2)-dependent CoB-CoM heterodisulfide reductase subunit B (Methanosarcina acetivorans (strain ATCC 35395 / DSM 2834 / JCM 12185 / C2A)).